A 295-amino-acid polypeptide reads, in one-letter code: Glutamyl-Q tRNA(Asp) synthetase (295 aa).

L-glutamate is bound by residues 5–9 (RFAPS) and E41. The 'HIGH' region motif lies at 8 to 18 (PSPTGLLHIGS). The Zn(2+) site is built by C97, C99, Y117, and C121. Y178 and R196 together coordinate L-glutamate. The 'KMSKS' region motif lies at 234 to 238 (KWSKQ). K237 provides a ligand contact to ATP.

It belongs to the class-I aminoacyl-tRNA synthetase family. GluQ subfamily. The cofactor is Zn(2+).

Catalyzes the tRNA-independent activation of glutamate in presence of ATP and the subsequent transfer of glutamate onto a tRNA(Asp). Glutamate is transferred on the 2-amino-5-(4,5-dihydroxy-2-cyclopenten-1-yl) moiety of the queuosine in the wobble position of the QUC anticodon. In Neisseria meningitidis serogroup C / serotype 2a (strain ATCC 700532 / DSM 15464 / FAM18), this protein is Glutamyl-Q tRNA(Asp) synthetase.